Reading from the N-terminus, the 147-residue chain is Hemoglobin subunit beta-H1 (147 aa).

The region spanning 3 to 147 is the Globin domain; sequence HFTAEEKAAI…VANALSHKYH (145 aa). His-64 and His-93 together coordinate heme b.

Belongs to the globin family. As to quaternary structure, heterotetramer of two alpha chains and two beta chains. As to expression, red blood cells.

Its function is as follows. This is an embryonic beta-type chain. The protein is Hemoglobin subunit beta-H1 (Hbb-bh1) of Mus musculus (Mouse).